The sequence spans 119 residues: uncharacterized protein (119 aa).

This is an uncharacterized protein from Methanocaldococcus jannaschii (strain ATCC 43067 / DSM 2661 / JAL-1 / JCM 10045 / NBRC 100440) (Methanococcus jannaschii).